The following is a 295-amino-acid chain: Bifunctional protein FolD (295 aa).

Residues 166 to 168, Ser191, and Ile232 contribute to the NADP(+) site; that span reads GRS.

It belongs to the tetrahydrofolate dehydrogenase/cyclohydrolase family. As to quaternary structure, homodimer.

The catalysed reaction is (6R)-5,10-methylene-5,6,7,8-tetrahydrofolate + NADP(+) = (6R)-5,10-methenyltetrahydrofolate + NADPH. It carries out the reaction (6R)-5,10-methenyltetrahydrofolate + H2O = (6R)-10-formyltetrahydrofolate + H(+). Its pathway is one-carbon metabolism; tetrahydrofolate interconversion. Catalyzes the oxidation of 5,10-methylenetetrahydrofolate to 5,10-methenyltetrahydrofolate and then the hydrolysis of 5,10-methenyltetrahydrofolate to 10-formyltetrahydrofolate. The sequence is that of Bifunctional protein FolD from Rhodopseudomonas palustris (strain ATCC BAA-98 / CGA009).